Here is a 3317-residue protein sequence, read N- to C-terminus: MRHPPVTWCAMLWLLMLVSGSWGQVNRLPFFTNHFFDTYLLISEDTPVGSSVTQLLARDMDNDPLVFGVSGEEASRFFAVEPDTGVVWLRQPLDRETKSEFTVEFSVSDHQGVITRKVNIQVGDVNDNAPTFHNQPYSVRIPENTPVGTPIFIVNATDPDLGAGGSVLYSFQPPSQFFAIDSARGIVTVIRELDYEVTQAYQLTVNATDQDKTRPLSTLANLAIIITDVQDMDPIFINLPYSTNIYEHSPPGTTVRVITAVDQDKGRPRGIGYTIVSGNTNSIFALDYISGALTLNGLLDRENPLYSHGFILTVKGTELNDDRSPSDATVTTTFNILVIDINDNAPEFNSSEYSVAITELAQVGFALPLFIQVVDKDEGLNSMFEVYLVGNNSHHFIISPTSVQGKADIRIRVAIPLDYETVDRYDFDLFANESVPDHVGYAKVKITLINENDNRPIFSQPLYNVSLYENITVGTSVLTVLATDNDVGTFGEVNYFFSDDPDRFSLDKDTGLIMLIARLDYELIQRFTLTVIARDGGGEETTGRVRINVLDVNDNVPTFQKDAYVGALRENEPSVTQLVRLRATDEDSPPNNLITYSIVNASAFGSYFDISVYEGYGVISVSRPLDYEQIPNGLIYLTVMAKDAGNPPLYSTVPVTIEVFDENDNPPTFSKPAYFVSVVENIMAGATVLFLNATDLDRSREYGQESIIYSLEGSSQFRINARSGEITTTSLLDRETKAEYILIVRAVDGGVGHNQKTGIATVNVTLLDINDNHPTWKDAPYYINLVEMTPPDSDVTTVVAVDPDLGKNGTLVYSIQPPNKFYSLNSTTGKIRTTHVMLDRENPDPVEAELMRKIIVSVTDCGRPPLKATSSATVFVNLLDLNDNDPTFQNLPFVAEVLEGTPAGVSVYQVVAIDLDEGLNGLVSYRMQVGMPRMDFVINSTSGVVTTTAELDRERIAEYQLRVVASDAGTPTKSSTSTLTIRVLDVNDETPTFFPAVYNVSVSEDVPREFRVVWLNCTDNDVGLNAELSYFITAGNVDGKFSVGYRDAVVRTVVGLDRETTAAYTLVLEAIDNVPVGKRRTGTATVFVTVLDVNDNRPIFLQSSYEASVPEDIPEGHSIVQLKATDADEGEFGRVWYRILHGNHGNNFRLHVSSGLLVRGPRPLDRERNSSHVLMAEAYNHDLGPMRSSVRVIVYVEDVNDEAPVFTQQQYNRLGLRETAGIGTSVIVVRATDRDTGDGGLVNYRILSGAEGKFEIDESTGLIVTVDYLDYETKTSYLMNVSATDGAPPFNQGFCSVYVTLLNELDEAVQFSNASYEAVIMENLALGTEIVRVQAYSIDNLNQITYRFDAYTSAQAKALFKIDAITGVITVKGLVDREKGDFYTLTVVADDGGPKVDSTVKVYVTVLDENDNSPRFDFTSDSAISVPEDCPVGQRVATVKARDPDAGSNGQVVFSLASGNIAGAFEIITSNDSIGEVFVAKPLDREELDHYILKIVASDRGTPPRKKDHILQVTILDVNDNPPVIESPFGYNVSVNENVGGGTSVVQVRATDRDIGINSVLSYYITEGNEDMTFRMDRISGEIATRPAPPDRERQNFYHLVVTVEDEGTPTLSATTHVYVTIVDENDNAPVFQQPHYEVVLDEGPDTVNTSLITVQALDLDEGPNGTVTYAIVAGNIINTFRINRRTGVITAAKELDYEISHGRYTLIVTATDQCPILSHRLTSTTTVLVNVNDINDNVPTFPRDYEGPFDVTEGQPGPRVWTFLAHDRDSGPNGQVEYSVVDGDPLGEFVISPVEGVLRVRKDVELDRETIAFYNLTICARDRGVPPLSSTMLVGIRVLDINDNDPVLLNLPMNITISENSPVSSFVAHVLASDADSGCNALLTFNITAGNRERAFFINATTGIVTVNRPLDRERIPEYRLTVSVKDNPENPRIARKDFDLLLVSLADENDNHPLFTEGTYQAEVMENSPAGTPLTVLNGPILALDADEDVYAVVTYQLLGTHSDLFVIDNSTGVVTVRSGVIIDREAFSPPFLELLLLAEDVGQLNGTAYLFITILDDNDNWPTFSPPAYTVHLLENCPPGFSVLQITATDEDSGLNGELVYRIEAGAQDRFLIHPVTGVIRVGNATIDREEQESYRLTVVATDRGTVPLSGTATVTILIDDINDSRPEFLNPIQTVSVLESTEPGTVIANVTAIDLDLNPKLEYHILSIVAKDDTDRLVPDQEDAFAVNINTGSVIVKSPLNRELVATYEVTLSVIDNASDLPERSVSVPNAKLTVNILDVNDNTPQFKPFGITYYTERVLEGATPGTTLIAVAAVDPDKGLNGLITYTLLDLIPPGYVQLEDSSAGKVIANRTVDYEEVHWLNFTVRASDNGSPPRAAEIPVYLEIVDINDNNPIFDQLSYQEAVFEDVAVGTVILRVTATDADSGNFALIEYSLVDGEGKFAINPNTGDIYVLSSLDREKKDHYILTALAKDNPGDVASNRRENSVQVVIRVLDVNDCRPQFSKPQFSTSVYENEPAGTSVITMLATDQDEGSNGQLTYSLEGPGMEAFSVDMDSGLVTTQRPLQSYERFNLTVVATDGGEPPLWGTTMLLVEVIDVNDNRPVFVRPPNGTILHIKEEIPLRSNVYEVYATDKDEGLNGAVRYSFLKSTGNRDWEYFTIDPISGLIQTAQRLDREKQAVYSLILVASDLGQPVPYETMQPLQVALEDIDDNEPLFVRPPKGSPQYQLLTVPEHSPRGTLVGNVTGAVDADEGPNAIVYYFIAAGNEDKNFHLQPDGRLLVLRDLDRETEAIFSFIVKASSNRSWTPPRGPSPALDLLTDLTLQEVRVVLEDINDQPPRFTKAEYTAGVATDAKVGSELIQVLALDADIGNNSLVFYGILAIHYFRALANDSEDVGQVFTMGSVDGILRTFDLFMAYSPGYFVVDIVARDLAGHNDTAIIGIYILRDDQRVKIVINEIPDRVRGFEEEFIRLLSNITGAIVNTDDVQFHVDMKGRVNFAQTELLIHVVNRDTNRILDVDRVIQMIDENKEQLRNLFRNYNVLDVQPAISVQLPDDMSALQMAIIVLAILLFLAAMLFVLMNWYYRTIHKRKLKAIVAGSAGNRGFIDIMDMPNTNKYSFDGANPVWLDPFCRNLELAAQAEHEDDLPENLSEIADLWNSPTRTHGTFGREPAAVKPEDDRYLRAAIQEYDNIAKLGQIIREGPIKLIHTDLEEEPGDHSPGQGSLRFRHKPPTELKGPDGIHIVHGSTGTLLATDLNSLPEDDQKGLDRSLETLTASEATAFERNARTESAKSTPLHKLRDVIMESPLEITEL.

Residues 1-23 (MRHPPVTWCAMLWLLMLVSGSWG) form the signal peptide. The Extracellular portion of the chain corresponds to 24 to 3062 (QVNRLPFFTN…SVQLPDDMSA (3039 aa)). Cadherin domains follow at residues 34–132 (HFFD…APTF), 133–236 (HNQP…DPIF), 237–348 (INLP…APEF), 349–458 (NSSE…RPIF), 459–559 (SQPL…VPTF), 560–669 (QKDA…PPTF), 670–782 (SKPA…APYY), 777–888 (KDAP…DPTF), 889–993 (QNLP…TPTF), 994–1100 (FPAV…RPIF), 1101–1206 (LQSS…APVF), 1208–1311 (QQQY…AVQF), 1312–1416 (SNAS…SPRF), 1418–1525 (FTSD…PPVI), 1527–1632 (SPFG…APVF), 1633–1742 (QQPH…VPTF), 1743–1849 (PRDY…DPVL), 1850–1957 (LNLP…HPLF), 1958–2067 (TEGT…WPTF), 2068–2172 (SPPA…RPEF), 2173–2291 (LNPI…TPQF), 2295–2400 (GITY…NPIF), 2401–2507 (DQLS…RPQF), 2508–2609 (SKPQ…RPVF), 2612–2720 (PPNG…EPLF), 2727–2844 (SPQY…PPRF), and 2845–2973 (TKAE…EEEF). N-linked (GlcNAc...) asparagine glycans are attached at residues Asn155 and Asn206. 32 N-linked (GlcNAc...) asparagine glycosylation sites follow: Asn349, Asn391, Asn432, Asn464, Asn470, Asn600, Asn692, Asn763, Asn808, Asn825, Asn939, Asn999, Asn1016, Asn1169, Asn1280, Asn1313, Asn1471, Asn1532, Asn1649, Asn1665, Asn1816, Asn1855, Asn1887, Asn1900, Asn2012, Asn2048, Asn2127, Asn2166, Asn2193, Asn2261, Asn2355, and Asn2367. N-linked (GlcNAc...) asparagine glycans are attached at residues Asn2576, Asn2614, Asn2747, Asn2806, Asn2875, Asn2894, Asn2939, and Asn2979. The chain crosses the membrane as a helical span at residues 3063-3083 (LQMAIIVLAILLFLAAMLFVL). At 3084–3317 (MNWYYRTIHK…MESPLEITEL (234 aa)) the chain is on the cytoplasmic side.

Antiparallel heterodimer with PCDH15. Interacts with USH1C and USH1G.

It localises to the cell membrane. In terms of biological role, cadherins are calcium-dependent cell adhesion proteins. They preferentially interact with themselves in a homophilic manner in connecting cells. CDH23 is required for establishing and/or maintaining the proper organization of the stereocilia bundle of hair cells in the cochlea and the vestibule during late embryonic/early postnatal development. It is part of the functional network formed by USH1C, USH1G, CDH23 and MYO7A that mediates mechanotransduction in cochlear hair cells. Required for normal hearing. The polypeptide is Cadherin-23 (Cdh23) (Rattus norvegicus (Rat)).